Here is a 79-residue protein sequence, read N- to C-terminus: Putative membrane protein insertion efficiency factor (79 aa).

This sequence belongs to the UPF0161 family.

It is found in the cell inner membrane. In terms of biological role, could be involved in insertion of integral membrane proteins into the membrane. In Prochlorococcus marinus (strain SARG / CCMP1375 / SS120), this protein is Putative membrane protein insertion efficiency factor.